A 152-amino-acid chain; its full sequence is Ubiquitin-conjugating enzyme E2 1 (152 aa).

A UBC core domain is found at 4–150; the sequence is PARKRLMRDF…VRDVVEQSWT (147 aa). Cys88 functions as the Glycyl thioester intermediate in the catalytic mechanism. The interval 119–152 is disordered; the sequence is NSPANSEAARMYSESKREYNRRVRDVVEQSWTAD. Basic and acidic residues predominate over residues 131-145; sequence SESKREYNRRVRDVV.

This sequence belongs to the ubiquitin-conjugating enzyme family. In terms of tissue distribution, ubiquitously expressed.

The enzyme catalyses S-ubiquitinyl-[E1 ubiquitin-activating enzyme]-L-cysteine + [E2 ubiquitin-conjugating enzyme]-L-cysteine = [E1 ubiquitin-activating enzyme]-L-cysteine + S-ubiquitinyl-[E2 ubiquitin-conjugating enzyme]-L-cysteine.. Its pathway is protein modification; protein ubiquitination. Accepts the ubiquitin from the E1 complex and catalyzes its covalent attachment to other proteins. The chain is Ubiquitin-conjugating enzyme E2 1 (UBC1) from Arabidopsis thaliana (Mouse-ear cress).